A 451-amino-acid chain; its full sequence is Phosphoglucosamine mutase (451 aa).

Catalysis depends on serine 101, which acts as the Phosphoserine intermediate. Residues serine 101, aspartate 243, aspartate 245, and aspartate 247 each coordinate Mg(2+). Position 101 is a phosphoserine (serine 101).

The protein belongs to the phosphohexose mutase family. Requires Mg(2+) as cofactor. In terms of processing, activated by phosphorylation.

The catalysed reaction is alpha-D-glucosamine 1-phosphate = D-glucosamine 6-phosphate. Its function is as follows. Catalyzes the conversion of glucosamine-6-phosphate to glucosamine-1-phosphate. The protein is Phosphoglucosamine mutase of Thermodesulfovibrio yellowstonii (strain ATCC 51303 / DSM 11347 / YP87).